We begin with the raw amino-acid sequence, 349 residues long: Protein RecA (349 aa).

Residue 64 to 71 (GPESSGKT) coordinates ATP. Positions 328 to 349 (NGEIEVEAPSEEEFEDLPLDLK) are disordered. Over residues 331 to 349 (IEVEAPSEEEFEDLPLDLK) the composition is skewed to acidic residues.

It belongs to the RecA family.

Its subcellular location is the cytoplasm. Can catalyze the hydrolysis of ATP in the presence of single-stranded DNA, the ATP-dependent uptake of single-stranded DNA by duplex DNA, and the ATP-dependent hybridization of homologous single-stranded DNAs. It interacts with LexA causing its activation and leading to its autocatalytic cleavage. This chain is Protein RecA, found in Halalkalibacterium halodurans (strain ATCC BAA-125 / DSM 18197 / FERM 7344 / JCM 9153 / C-125) (Bacillus halodurans).